The primary structure comprises 485 residues: Dipeptide and tripeptide permease C (485 aa).

At M1–Y12 the chain is on the cytoplasmic side. The helical transmembrane segment at I13–L33 threads the bilayer. Topologically, residues Y34–A46 are periplasmic. Residues I47 to L67 traverse the membrane as a helical segment. Over A68–R70 the chain is Cytoplasmic. A helical transmembrane segment spans residues L71 to G93. At I94–L102 the chain is on the periplasmic side. Residues Y103 to G125 traverse the membrane as a helical segment. At E126–S140 the chain is on the cytoplasmic side. The chain crosses the membrane as a helical span at residues L141–A161. Topologically, residues Q162–Y164 are periplasmic. The helical transmembrane segment at G165–L185 threads the bilayer. At S186–A208 the chain is on the cytoplasmic side. Residues L209 to L229 form a helical membrane-spanning segment. The Periplasmic segment spans residues L230–W234. Residues S235–I255 traverse the membrane as a helical segment. Residues K256–R262 are Cytoplasmic-facing. Residues A263 to Q283 form a helical membrane-spanning segment. Topologically, residues G284–T307 are periplasmic. Residues A308–L328 form a helical membrane-spanning segment. Residues A329–R340 lie on the Cytoplasmic side of the membrane. The helical transmembrane segment at V341–F361 threads the bilayer. At D362–G375 the chain is on the periplasmic side. The chain crosses the membrane as a helical span at residues V376–I396. Residues A397 to G406 lie on the Cytoplasmic side of the membrane. A helical transmembrane segment spans residues V407 to V427. The Periplasmic segment spans residues A428–R446. The helical transmembrane segment at F447–F467 threads the bilayer. At A468–D485 the chain is on the cytoplasmic side.

It belongs to the major facilitator superfamily. Proton-dependent oligopeptide transporter (POT/PTR) (TC 2.A.17) family. Monomer.

It is found in the cell inner membrane. Proton-dependent permease that transports di- and tripeptides. Shows significantly higher specificity towards dipeptides than tripeptides. Has a preference for dipeptides with a C-terminal Lys residue. Can bind Ala-Lys, Lys-Ala, Ala-Ala. Can also transport alanine and trialanine. The sequence is that of Dipeptide and tripeptide permease C from Escherichia coli (strain K12).